The primary structure comprises 345 residues: Anthranilate phosphoribosyltransferase (345 aa).

Residues Gly-84, 87-88, Thr-92, 94-97, 112-120, and Ser-124 contribute to the 5-phospho-alpha-D-ribose 1-diphosphate site; these read GD, NIST, and KHGNRSVSS. Gly-84 is an anthranilate binding site. Position 96 (Ser-96) interacts with Mg(2+). An anthranilate-binding site is contributed by Asn-115. Arg-170 provides a ligand contact to anthranilate. Asp-229 and Glu-230 together coordinate Mg(2+).

The protein belongs to the anthranilate phosphoribosyltransferase family. In terms of assembly, homodimer. It depends on Mg(2+) as a cofactor.

The catalysed reaction is N-(5-phospho-beta-D-ribosyl)anthranilate + diphosphate = 5-phospho-alpha-D-ribose 1-diphosphate + anthranilate. It participates in amino-acid biosynthesis; L-tryptophan biosynthesis; L-tryptophan from chorismate: step 2/5. Its function is as follows. Catalyzes the transfer of the phosphoribosyl group of 5-phosphorylribose-1-pyrophosphate (PRPP) to anthranilate to yield N-(5'-phosphoribosyl)-anthranilate (PRA). The protein is Anthranilate phosphoribosyltransferase of Xanthomonas oryzae pv. oryzae (strain MAFF 311018).